We begin with the raw amino-acid sequence, 1011 residues long: Phosphoenolpyruvate carboxylase (1011 aa).

Residues histidine 207 and lysine 658 contribute to the active site.

Belongs to the PEPCase type 1 family. Requires Mg(2+) as cofactor.

It carries out the reaction oxaloacetate + phosphate = phosphoenolpyruvate + hydrogencarbonate. Forms oxaloacetate, a four-carbon dicarboxylic acid source for the tricarboxylic acid cycle. The polypeptide is Phosphoenolpyruvate carboxylase (ppc) (Thermosynechococcus vestitus (strain NIES-2133 / IAM M-273 / BP-1)).